The sequence spans 844 residues: RPA-related protein RADX (844 aa).

The segment at residues Trp228 to Asn331 is a DNA-binding region (OB). 2 disordered regions span residues Pro571 to Asp609 and Gly626 to Ser664. A compositionally biased stretch (polar residues) spans Ala572–Ala587. The segment covering Lys590–Met608 has biased composition (basic and acidic residues). The span at Ser652–Gly662 shows a compositional bias: polar residues.

The protein resides in the chromosome. Its function is as follows. Single-stranded DNA-binding protein recruited to replication forks to maintain genome stability. Prevents fork collapse by antagonizing the accumulation of RAD51 at forks to ensure the proper balance of fork remodeling and protection without interfering with the capacity of cells to complete homologous recombination of double-strand breaks. The chain is RPA-related protein RADX from Rattus norvegicus (Rat).